Reading from the N-terminus, the 730-residue chain is Catalase-peroxidase (730 aa).

The segment covering 1 to 11 (MDAKTDDKDAG) has biased composition (basic and acidic residues). The signal sequence occupies residues 1-21 (MDAKTDDKDAGKCPFSSGSHA). Residues 1–24 (MDAKTDDKDAGKCPFSSGSHAHRN) are disordered. The segment at residues 96-218 (WHSAGTYRIS…LGAVQMGLIY (123 aa)) is a cross-link (tryptophyl-tyrosyl-methioninium (Trp-Tyr) (with M-244)). Residue His97 is the Proton acceptor of the active site. Residues 218 to 244 (YVNPEGPNGNPDPVGSAKDIRETFYRM) constitute a cross-link (tryptophyl-tyrosyl-methioninium (Tyr-Met) (with W-96)). Heme b is bound at residue His259.

It belongs to the peroxidase family. Peroxidase/catalase subfamily. Homodimer or homotetramer. It depends on heme b as a cofactor. In terms of processing, formation of the three residue Trp-Tyr-Met cross-link is important for the catalase, but not the peroxidase activity of the enzyme.

The enzyme catalyses H2O2 + AH2 = A + 2 H2O. It carries out the reaction 2 H2O2 = O2 + 2 H2O. Its function is as follows. Bifunctional enzyme with both catalase and broad-spectrum peroxidase activity. This is Catalase-peroxidase from Rhodopseudomonas palustris (strain BisA53).